The sequence spans 1222 residues: ATP-dependent helicase/nuclease subunit A (1222 aa).

Residues 39 to 495 (QKRTAQQIEA…ILLKENFRSQ (457 aa)) form the UvrD-like helicase ATP-binding domain. 60–67 (ASAGSGKT) provides a ligand contact to ATP. The UvrD-like helicase C-terminal domain occupies 524–810 (QLIAGSHAQT…NLMTIHKSKG (287 aa)).

The protein belongs to the helicase family. AddA subfamily. In terms of assembly, heterodimer of AddA and AddB/RexB. Requires Mg(2+) as cofactor.

The enzyme catalyses Couples ATP hydrolysis with the unwinding of duplex DNA by translocating in the 3'-5' direction.. The catalysed reaction is ATP + H2O = ADP + phosphate + H(+). In terms of biological role, the heterodimer acts as both an ATP-dependent DNA helicase and an ATP-dependent, dual-direction single-stranded exonuclease. Recognizes the chi site generating a DNA molecule suitable for the initiation of homologous recombination. The AddA nuclease domain is required for chi fragment generation; this subunit has the helicase and 3' -&gt; 5' nuclease activities. The sequence is that of ATP-dependent helicase/nuclease subunit A from Streptococcus pyogenes serotype M3 (strain ATCC BAA-595 / MGAS315).